An 881-amino-acid polypeptide reads, in one-letter code: Phosphoenolpyruvate carboxylase (881 aa).

Active-site residues include histidine 138 and lysine 545.

This sequence belongs to the PEPCase type 1 family. The cofactor is Mg(2+).

The catalysed reaction is oxaloacetate + phosphate = phosphoenolpyruvate + hydrogencarbonate. Forms oxaloacetate, a four-carbon dicarboxylic acid source for the tricarboxylic acid cycle. The sequence is that of Phosphoenolpyruvate carboxylase from Shewanella oneidensis (strain ATCC 700550 / JCM 31522 / CIP 106686 / LMG 19005 / NCIMB 14063 / MR-1).